We begin with the raw amino-acid sequence, 269 residues long: tRNA pseudouridine synthase A (269 aa).

Catalysis depends on D51, which acts as the Nucleophile. Y109 serves as a coordination point for substrate.

Belongs to the tRNA pseudouridine synthase TruA family. In terms of assembly, homodimer.

The catalysed reaction is uridine(38/39/40) in tRNA = pseudouridine(38/39/40) in tRNA. In terms of biological role, formation of pseudouridine at positions 38, 39 and 40 in the anticodon stem and loop of transfer RNAs. This Haemophilus influenzae (strain ATCC 51907 / DSM 11121 / KW20 / Rd) protein is tRNA pseudouridine synthase A.